Reading from the N-terminus, the 133-residue chain is C-C motif chemokine 21b (133 aa).

The N-terminal stretch at 1–23 (MAQMMTLSLLSLVLALCIPWTQG) is a signal peptide. 3 disulfides stabilise this stretch: cysteine 31–cysteine 57, cysteine 32–cysteine 75, and cysteine 103–cysteine 122. Positions 87-133 (MRRLDQPPAPGKQSPGCRKNRGTSKSGKKGKGSKGCKRTEQTQPSRG) are disordered. Residues 98 to 133 (KQSPGCRKNRGTSKSGKKGKGSKGCKRTEQTQPSRG) are C-terminal basic extension. A compositionally biased stretch (basic residues) spans 104–122 (RKNRGTSKSGKKGKGSKGC).

It belongs to the intercrine beta (chemokine CC) family. In terms of assembly, binds to CCR7 and to CXCR3. Interacts with PDPN; relocalizes PDPN to the basolateral membrane. Interacts with GPR174. Expressed strongly in lung, spleen, thymus, peripheral and mesentric lymph nodes. Also expressed in the testis, kidney, liver, and heart.

Its subcellular location is the secreted. Functionally, inhibits hemopoiesis and stimulates chemotaxis. Chemotactic in vitro for thymocytes and activated T-cells, but not for B-cells, macrophages, or neutrophils. Potent mesangial cell chemoattractant. Shows preferential activity towards naive T-cells. May play a role in mediating homing of lymphocytes to secondary lymphoid organs. This Mus musculus (Mouse) protein is C-C motif chemokine 21b (Ccl21b).